We begin with the raw amino-acid sequence, 947 residues long: Bifunctional glutamine synthetase adenylyltransferase/adenylyl-removing enzyme (947 aa).

Residues 1–440 (MTPLSSPLSQ…VFNELIGDDE (440 aa)) form an adenylyl removase region. The segment at 450–947 (SEPWREVWQD…ASWRKWLVAV (498 aa)) is adenylyl transferase.

The protein belongs to the GlnE family. Mg(2+) is required as a cofactor.

It carries out the reaction [glutamine synthetase]-O(4)-(5'-adenylyl)-L-tyrosine + phosphate = [glutamine synthetase]-L-tyrosine + ADP. It catalyses the reaction [glutamine synthetase]-L-tyrosine + ATP = [glutamine synthetase]-O(4)-(5'-adenylyl)-L-tyrosine + diphosphate. Its function is as follows. Involved in the regulation of glutamine synthetase GlnA, a key enzyme in the process to assimilate ammonia. When cellular nitrogen levels are high, the C-terminal adenylyl transferase (AT) inactivates GlnA by covalent transfer of an adenylyl group from ATP to specific tyrosine residue of GlnA, thus reducing its activity. Conversely, when nitrogen levels are low, the N-terminal adenylyl removase (AR) activates GlnA by removing the adenylyl group by phosphorolysis, increasing its activity. The regulatory region of GlnE binds the signal transduction protein PII (GlnB) which indicates the nitrogen status of the cell. This is Bifunctional glutamine synthetase adenylyltransferase/adenylyl-removing enzyme from Salmonella typhimurium (strain LT2 / SGSC1412 / ATCC 700720).